The sequence spans 166 residues: Eukaryotic translation initiation factor 5A (166 aa).

Hypusine is present on lysine 52. The tract at residues 99-125 (DREDPSKPAHLSLMDDEGETRDNLDMP) is disordered.

The protein belongs to the eIF-5A family. In terms of processing, lys-52 undergoes hypusination, a unique post-translational modification that consists in the addition of a butylamino group from spermidine to lysine side chain, leading to the formation of the unusual amino acid hypusine. eIF-5As are the only known proteins to undergo this modification, which is essential for their function. Hypusination is mediated by the consecutive action of deoxyhypusine synthase DHSc and deoxyhypusine hydroxylase DOHH.

It localises to the cytoplasm. Translation factor that promotes translation elongation and termination, particularly upon ribosome stalling at specific amino acid sequence contexts. Binds between the exit (E) and peptidyl (P) site of the ribosome and promotes rescue of stalled ribosome: specifically required for efficient translation of polyproline-containing peptides as well as other motifs that stall the ribosome. Acts as a ribosome quality control (RQC) cofactor by joining the RQC complex to facilitate peptidyl transfer during CAT tailing step. Required for cell growth during both bloodstream (BF) and insect procyclic (PF) life cycle stages and for survival of the bloodstream form. The polypeptide is Eukaryotic translation initiation factor 5A (Trypanosoma brucei brucei (strain 927/4 GUTat10.1)).